We begin with the raw amino-acid sequence, 360 residues long: Uptake hydrogenase small subunit (360 aa).

The segment at residues 1–43 is a signal peptide (tat-type signal); that stretch reads MVETFYEVMRRQGISRRSFLKYCSLTATSLGLGPSFLPQIAHA. [4Fe-4S] cluster contacts are provided by Cys-60, Cys-63, Cys-158, Cys-192, His-230, Cys-233, Cys-258, and Cys-264. The [3Fe-4S] cluster site is built by Cys-273, Cys-292, and Cys-295.

Belongs to the [NiFe]/[NiFeSe] hydrogenase small subunit family. As to quaternary structure, heterodimer of a large and a small subunit. [4Fe-4S] cluster is required as a cofactor. [3Fe-4S] cluster serves as cofactor. Post-translationally, predicted to be exported by the Tat system. The position of the signal peptide cleavage has been experimentally proven.

The protein resides in the cell membrane. The catalysed reaction is H2 + A = AH2. This enzyme recycles the H(2) produced by nitrogenase to increase the production of ATP and to protect nitrogenase against inhibition or damage by O(2) under carbon- or phosphate-limited conditions. This is Uptake hydrogenase small subunit (hoxK) from Cupriavidus necator (strain ATCC 17699 / DSM 428 / KCTC 22496 / NCIMB 10442 / H16 / Stanier 337) (Ralstonia eutropha).